The primary structure comprises 136 residues: Small ribosomal subunit protein bS16 (136 aa).

Positions 113–122 (LALKSHRRSA) are enriched in basic residues. The segment at 113 to 136 (LALKSHRRSAKKEAEAKAATGGEA) is disordered.

Belongs to the bacterial ribosomal protein bS16 family.

In Pelodictyon phaeoclathratiforme (strain DSM 5477 / BU-1), this protein is Small ribosomal subunit protein bS16.